The primary structure comprises 226 residues: Leucyl/phenylalanyl-tRNA--protein transferase (226 aa).

Belongs to the L/F-transferase family.

It is found in the cytoplasm. It carries out the reaction N-terminal L-lysyl-[protein] + L-leucyl-tRNA(Leu) = N-terminal L-leucyl-L-lysyl-[protein] + tRNA(Leu) + H(+). The catalysed reaction is N-terminal L-arginyl-[protein] + L-leucyl-tRNA(Leu) = N-terminal L-leucyl-L-arginyl-[protein] + tRNA(Leu) + H(+). The enzyme catalyses L-phenylalanyl-tRNA(Phe) + an N-terminal L-alpha-aminoacyl-[protein] = an N-terminal L-phenylalanyl-L-alpha-aminoacyl-[protein] + tRNA(Phe). Functions in the N-end rule pathway of protein degradation where it conjugates Leu, Phe and, less efficiently, Met from aminoacyl-tRNAs to the N-termini of proteins containing an N-terminal arginine or lysine. The sequence is that of Leucyl/phenylalanyl-tRNA--protein transferase from Pseudomonas paraeruginosa (strain DSM 24068 / PA7) (Pseudomonas aeruginosa (strain PA7)).